The primary structure comprises 344 residues: uncharacterized protein (344 aa).

Topologically, residues 1–98 (MIDFVKSRDT…NNDEIGIWNY (98 aa)) are cytoplasmic. The chain crosses the membrane as a helical span at residues 99–119 (ISVAEMGGVLLFLSYWIWTCL). Residue H120 is a topological domain, lumenal. A helical transmembrane segment spans residues 121–141 (FSKIIFPAQKVICLYIFLFAL). At 142–169 (NQTLQECIEEYVFSSECIKYRQFYSVYE) the chain is on the cytoplasmic side. A helical membrane pass occupies residues 170–192 (IIDFLRTNFYRLFVIYCALGFGI). The Lumenal portion of the chain corresponds to 193-198 (TRTVPK). A helical membrane pass occupies residues 199–219 (YLMIKGISIVIALCSVYWISL). The Cytoplasmic segment spans residues 220–222 (YKD). The chain crosses the membrane as a helical span at residues 223-243 (VYVVSEIFDMIQYEVFPAIWV). Topologically, residues 244–273 (YSICHLLKQCTSVTTYENASKARFFRRMLN) are lumenal. A helical membrane pass occupies residues 274 to 294 (AFIFIFCASPMLHYLSNIIFG). The Cytoplasmic portion of the chain corresponds to 295 to 344 (NFDYRLSVIIGDLFTFMEKIAFPCYIMFPTHNEALAYNRNVAEEAQEKMI).

It is found in the endoplasmic reticulum membrane. This is an uncharacterized protein from Schizosaccharomyces pombe (strain 972 / ATCC 24843) (Fission yeast).